The sequence spans 680 residues: DNA ligase 1 (680 aa).

Residues 35 to 39 (DAEYD), 84 to 85 (SL), and Asp-115 each bind NAD(+). The active-site N6-AMP-lysine intermediate is Lys-117. NAD(+)-binding residues include Arg-138, Glu-175, Lys-295, and Lys-319. The Zn(2+) site is built by Cys-413, Cys-416, Cys-431, and Cys-436. The region spanning 599 to 680 (REGSQLQGLK…FANLLKGLDR (82 aa)) is the BRCT domain.

The protein belongs to the NAD-dependent DNA ligase family. LigA subfamily. Mg(2+) is required as a cofactor. The cofactor is Mn(2+).

The enzyme catalyses NAD(+) + (deoxyribonucleotide)n-3'-hydroxyl + 5'-phospho-(deoxyribonucleotide)m = (deoxyribonucleotide)n+m + AMP + beta-nicotinamide D-nucleotide.. Functionally, DNA ligase that catalyzes the formation of phosphodiester linkages between 5'-phosphoryl and 3'-hydroxyl groups in double-stranded DNA using NAD as a coenzyme and as the energy source for the reaction. It is essential for DNA replication and repair of damaged DNA. In Nitratidesulfovibrio vulgaris (strain DP4) (Desulfovibrio vulgaris), this protein is DNA ligase 1.